Consider the following 558-residue polypeptide: 2-isopropylmalate synthase (558 aa).

The region spanning Pro-30–Pro-303 is the Pyruvate carboxyltransferase domain. Positions 39, 242, 244, and 278 each coordinate Mg(2+). Positions Leu-438–Ile-558 are regulatory domain.

The protein belongs to the alpha-IPM synthase/homocitrate synthase family. LeuA type 2 subfamily. Homodimer. Mg(2+) serves as cofactor.

The protein resides in the cytoplasm. The catalysed reaction is 3-methyl-2-oxobutanoate + acetyl-CoA + H2O = (2S)-2-isopropylmalate + CoA + H(+). It participates in amino-acid biosynthesis; L-leucine biosynthesis; L-leucine from 3-methyl-2-oxobutanoate: step 1/4. Functionally, catalyzes the condensation of the acetyl group of acetyl-CoA with 3-methyl-2-oxobutanoate (2-ketoisovalerate) to form 3-carboxy-3-hydroxy-4-methylpentanoate (2-isopropylmalate). In Helicobacter hepaticus (strain ATCC 51449 / 3B1), this protein is 2-isopropylmalate synthase.